A 942-amino-acid polypeptide reads, in one-letter code: UvrABC system protein A (942 aa).

32 to 39 (GLSGSGKS) serves as a coordination point for ATP. The C4-type zinc finger occupies 251–278 (CPVCGFTVPELEPRLFSFNAPFGSCPTC). 2 consecutive ABC transporter domains span residues 308-589 (WNPI…KKSI) and 609-937 (GNGR…HYLK). 641 to 648 (GVSGSGKS) lines the ATP pocket. The C4-type zinc-finger motif lies at 740 to 766 (CEACSGDGIIKIEMHFLPDVYVPCEVC).

It belongs to the ABC transporter superfamily. UvrA family. Forms a heterotetramer with UvrB during the search for lesions.

The protein localises to the cytoplasm. Functionally, the UvrABC repair system catalyzes the recognition and processing of DNA lesions. UvrA is an ATPase and a DNA-binding protein. A damage recognition complex composed of 2 UvrA and 2 UvrB subunits scans DNA for abnormalities. When the presence of a lesion has been verified by UvrB, the UvrA molecules dissociate. In Streptococcus pyogenes serotype M1, this protein is UvrABC system protein A.